We begin with the raw amino-acid sequence, 200 residues long: MFAELAPYLSNPRQTLAQILNFALVLSTAFMGWKALSVYTNSSSPIVVVLSGSMEPAFQRGDLLFLWNNSPRAEVGEIVVYNVQGKDIPIVHRVIKAFGTGDGGKKSQRRLEKEADKRSGPGLSSPISHQMLTKGDNNIADDTELYAQGQDYLDRKLDIVGSVRGYIPAVGYVTIMLAENPWMKTVLLGIMGVMVMLQRE.

The Cytoplasmic segment spans residues 1–15 (MFAELAPYLSNPRQT). A helical; Signal-anchor for type II membrane protein membrane pass occupies residues 16 to 33 (LAQILNFALVLSTAFMGW). Residues 34-200 (KALSVYTNSS…MGVMVMLQRE (167 aa)) are Lumenal-facing. A glycan (N-linked (GlcNAc...) asparagine) is linked at Asn41. Residues Ser53 and His92 each act as charge relay system in the active site. The interval 101–131 (GDGGKKSQRRLEKEADKRSGPGLSSPISHQM) is disordered. Residues 103 to 119 (GGKKSQRRLEKEADKRS) show a composition bias toward basic and acidic residues. Residue Asp142 is the Charge relay system of the active site. Residues 186–197 (VLLGIMGVMVML) are C-terminal short (CTS) helix.

It belongs to the peptidase S26B family. In terms of assembly, component of the signal peptidase complex (SPC) composed of a catalytic subunit SEC11 and three accessory subunits SPC1, SPC2 and SPC3. The complex induces a local thinning of the ER membrane which is used to measure the length of the signal peptide (SP) h-region of protein substrates. This ensures the selectivity of the complex towards h-regions shorter than 18-20 amino acids. SPC associates with the translocon complex.

The protein localises to the endoplasmic reticulum membrane. It catalyses the reaction Cleavage of hydrophobic, N-terminal signal or leader sequences from secreted and periplasmic proteins.. In terms of biological role, catalytic component of the signal peptidase complex (SPC) which catalyzes the cleavage of N-terminal signal sequences from nascent proteins as they are translocated into the lumen of the endoplasmic reticulum. Specifically cleaves N-terminal signal peptides that contain a hydrophobic alpha-helix (h-region) shorter than 18-20 amino acids. The sequence is that of Signal peptidase complex catalytic subunit SEC11 (SEC11) from Arthroderma gypseum (strain ATCC MYA-4604 / CBS 118893) (Microsporum gypseum).